An 872-amino-acid polypeptide reads, in one-letter code: Protein translocase subunit SecA (872 aa).

ATP is bound by residues Q87, 105–109 (GEGKT), and D500. Zn(2+) is bound by residues C855, C857, C866, and H867.

The protein belongs to the SecA family. Monomer and homodimer. Part of the essential Sec protein translocation apparatus which comprises SecA, SecYEG and auxiliary proteins SecDF-YajC and YidC. It depends on Zn(2+) as a cofactor.

The protein localises to the cell inner membrane. It localises to the cytoplasm. The enzyme catalyses ATP + H2O + cellular proteinSide 1 = ADP + phosphate + cellular proteinSide 2.. Functionally, part of the Sec protein translocase complex. Interacts with the SecYEG preprotein conducting channel. Has a central role in coupling the hydrolysis of ATP to the transfer of proteins into and across the cell membrane, serving both as a receptor for the preprotein-SecB complex and as an ATP-driven molecular motor driving the stepwise translocation of polypeptide chains across the membrane. The sequence is that of Protein translocase subunit SecA from Anaplasma marginale (strain St. Maries).